Reading from the N-terminus, the 243-residue chain is MSTAITRQIVLDTETTGMNQIGAHYEGHKIIEIGAVEVINRRLTGNNFHVYLKPDRLVDPEAFGVHGIADEFLLDKPVFADVVDEFLDYIRGAELVIHNASFDIGFMDYEFGLLKRDIPKTNTFCKVTDSLALARKMFPGKRNSLDALCSRYEIDNSKRTLHGALLDAQILAEVYLAMTGGQTSMTFAMEGETQRQQGEATIQRIVRQASRLRVVFASEEELAAHESRLDLVQKKGGSCLWRA.

Residues D12 and E14 each contribute to the a divalent metal cation site. Positions 12, 14, 61, and 66 each coordinate substrate. H162 serves as the catalytic Proton acceptor. Position 167 (D167) interacts with a divalent metal cation. D167 is a binding site for substrate.

The DNA polymerase holoenzyme is a complex that contains 10 different types of subunits. These subunits are organized into 3 functionally essential subassemblies: the pol III core, the beta sliding clamp processivity factor and the clamp-loading complex. The pol III core (subunits alpha,epsilon and theta) contains the polymerase and the 3'-5' exonuclease proofreading activities. The polymerase is tethered to the template via the sliding clamp processivity factor. The clamp-loading complex assembles the beta processivity factor onto the primer template and plays a central role in the organization and communication at the replication fork. This complex contains delta, delta', psi and chi, and copies of either or both of two different DnaX proteins, gamma and tau. The composition of the holoenzyme is, therefore: (alpha,epsilon,theta)[2]-(gamma/tau)[3]-delta,delta', psi,chi-beta[4]. Requires Mg(2+) as cofactor. The cofactor is Mn(2+).

The catalysed reaction is DNA(n) + a 2'-deoxyribonucleoside 5'-triphosphate = DNA(n+1) + diphosphate. DNA polymerase III is a complex, multichain enzyme responsible for most of the replicative synthesis in bacteria. The epsilon subunit contains the editing function and is a proofreading 3'-5' exonuclease. The protein is DNA polymerase III subunit epsilon (dnaQ) of Salmonella typhi.